The chain runs to 605 residues: Formin-binding protein 1-like (605 aa).

The F-BAR domain occupies 1–263 (MSWGTELWDQ…AAKSVDERRD (263 aa)). Residues 66 to 258 (FTSCIAFFNI…EGMILAAKSV (193 aa)) adopt a coiled-coil conformation. The segment at 245–535 (SKCLEGMILA…EFDDEFEDDD (291 aa)) is interaction with CDC42. A Phosphoserine modification is found at Ser295. Residues 325–345 (FGKKPKPQSPPLTPTSLFTSS) form a disordered region. Positions 392 to 484 (LEDFSHLPPE…VEGKTGVRGD (93 aa)) form a coiled coil. In terms of domain architecture, REM-1 spans 397-474 (HLPPEQRRKK…IHKNEAWLSE (78 aa)). Positions 480–490 (GVRGDRRHSSD) are enriched in basic and acidic residues. The disordered stretch occupies residues 480-539 (GVRGDRRHSSDINHLVTQGRESPEGSYTDDANQEVRGPPQQHGHHSEFDDEFEDDDPLPA). A phosphoserine mark is found at Ser488, Ser501, and Ser505. Residues 522-605 (GHHSEFDDEF…VTLEKNSKGS (84 aa)) form an interaction with DNM1 region. Over residues 527 to 536 (FDDEFEDDDP) the composition is skewed to acidic residues. The region spanning 538–599 (PAIGHCKAIY…PTTYIDVTLE (62 aa)) is the SH3 domain. The interval 541-597 (GHCKAIYPFDGHNEGTLAMKEGEVLYIIEEDKGDGWTRARRQNGEEGYVPTTYIDVT) is interaction with DNM2 and WASL. Residues 541-605 (GHCKAIYPFD…VTLEKNSKGS (65 aa)) are interaction with DAAM1, DIAPH1 and DIAPH2.

It belongs to the FNBP1 family. Homodimerizes, the dimers can polymerize end-to-end to form filamentous structures. Interacts with GTP-bound CDC42. Interacts with DAAM1, DIAPH1, DIAPH2, DNM1, DNM2 and WASL/N-WASP. Interacts with ATG3. Interacts (via SH3 domain) with ABI1, WASF2, CDC42 and WIPF1. In terms of tissue distribution, isoform 1 is expressed in brain. Isoform 2 is expressed in brain, kidney and lung. Within the brain expression is seen in cortical neurons, hippocampal pyramidal neurons, hypothalamus and piriform cortex.

It is found in the cytoplasm. The protein localises to the cytoskeleton. Its subcellular location is the cell cortex. It localises to the cytoplasmic vesicle. The protein resides in the cell membrane. In terms of biological role, required to coordinate membrane tubulation with reorganization of the actin cytoskeleton during endocytosis. May bind to lipids such as phosphatidylinositol 4,5-bisphosphate and phosphatidylserine and promote membrane invagination and the formation of tubules. Also promotes CDC42-induced actin polymerization by activating the WASL-WASPIP complex, the predominant form of WASL/N-WASP in cells. Actin polymerization may promote the fission of membrane tubules to form endocytic vesicles. Essential for autophagy of intracellular bacterial pathogens. May negatively regulate neurite extension and axon branching in developing neurons. The sequence is that of Formin-binding protein 1-like (Fnbp1l) from Rattus norvegicus (Rat).